Reading from the N-terminus, the 323-residue chain is Ribose 1,5-bisphosphate isomerase (323 aa).

Substrate-binding positions include 22-25 and arginine 65; that span reads RGAA. Cysteine 130 acts as the Proton acceptor in catalysis. Aspartate 199 serves as the catalytic Proton donor. Residues 209–210 and lysine 235 contribute to the substrate site; that span reads NK. Residue lysine 210 forms a Glycyl lysine isopeptide (Lys-Gly) (interchain with G-Cter in SAMP2) linkage.

Belongs to the eIF-2B alpha/beta/delta subunits family. R15P isomerase subfamily.

The catalysed reaction is alpha-D-ribose 1,5-bisphosphate = D-ribulose 1,5-bisphosphate. Catalyzes the isomerization of ribose 1,5-bisphosphate (R15P) to ribulose 1,5-bisphosphate (RuBP), the CO(2) acceptor and substrate for RubisCO. Functions in an archaeal AMP degradation pathway, together with AMP phosphorylase and RubisCO. In Haloferax volcanii (strain ATCC 29605 / DSM 3757 / JCM 8879 / NBRC 14742 / NCIMB 2012 / VKM B-1768 / DS2) (Halobacterium volcanii), this protein is Ribose 1,5-bisphosphate isomerase.